The sequence spans 423 residues: Glucose-1-phosphate adenylyltransferase (423 aa).

Residues tyrosine 112, glycine 177, glutamate 192 to lysine 193, and serine 210 contribute to the alpha-D-glucose 1-phosphate site.

It belongs to the bacterial/plant glucose-1-phosphate adenylyltransferase family. As to quaternary structure, homotetramer.

It carries out the reaction alpha-D-glucose 1-phosphate + ATP + H(+) = ADP-alpha-D-glucose + diphosphate. Its pathway is glycan biosynthesis; glycogen biosynthesis. Its function is as follows. Involved in the biosynthesis of ADP-glucose, a building block required for the elongation reactions to produce glycogen. Catalyzes the reaction between ATP and alpha-D-glucose 1-phosphate (G1P) to produce pyrophosphate and ADP-Glc. The protein is Glucose-1-phosphate adenylyltransferase of Rhodospirillum rubrum (strain ATCC 11170 / ATH 1.1.1 / DSM 467 / LMG 4362 / NCIMB 8255 / S1).